The following is a 197-amino-acid chain: Putative methyltransferase Mtx subunit A (197 aa).

It belongs to the MtrA family. In terms of assembly, may be part of a complex composed of 3 subunits; MtxA, MtxH and MtxX.

The protein is Putative methyltransferase Mtx subunit A (mtxA) of Methanosarcina barkeri (strain Fusaro / DSM 804).